We begin with the raw amino-acid sequence, 759 residues long: Pseudocleavage protein nop-1 (759 aa).

Disordered regions lie at residues 1 to 46, 334 to 361, 379 to 413, 440 to 495, and 732 to 759; these read MSAP…SSIF, KIFP…MDKK, LSVN…NLSQ, QSSR…KKER, and ESDG…GAKI. Residues 10 to 42 show a composition bias toward basic and acidic residues; sequence DIHSDDRDHADHQTKKEKHWFEEKSEQNGENRR. A compositionally biased stretch (low complexity) spans 448–465; sequence TGNSSISSGVGSIASGTS. Over residues 473-482 the composition is skewed to polar residues; it reads GSRSGQSISR. The span at 485–495 shows a compositional bias: basic and acidic residues; the sequence is SRRDDEGKKER. Residues 736-759 are compositionally biased toward polar residues; it reads PASSNDDFDTQSTASTSTVFGAKI.

It localises to the nucleus. The protein localises to the cytoplasm. It is found in the cell cortex. The protein resides in the cleavage furrow. In terms of biological role, required for formation of the pseudocleavage furrow during the first cleavage of the embryo and also mediates aster-induced furrowing during cytokinesis. Promotes cortical recruitment of ani-1 and nmy-2 during pseudocleavage and cytokinesis and promotes the accumulation of actin at furrowing regions. Regulates establishment of embryonic cell polarity. This chain is Pseudocleavage protein nop-1 (nop-1), found in Caenorhabditis elegans.